A 312-amino-acid chain; its full sequence is 6-hydroxy-3-succinoylpyridine 3-monooxygenase HspA (312 aa).

Positions 14-210 constitute an NYN domain; sequence IYIDGYNFYY…RSANTDLIKF (197 aa).

The enzyme catalyses 4-(6-hydroxypyridin-3-yl)-4-oxobutanoate + 2 NADH + O2 + 2 H(+) = 2,5-dihydroxypyridine + succinate semialdehyde + 2 NAD(+) + H2O. It participates in alkaloid degradation; nicotine degradation. Functionally, involved in the nicotine degradation. Catalyzes the cleavage of 6-hydroxy-3-succinoylpyridine (HSP) by incorporation of oxygen at the 3-position to produce to 2,5-dihydroxypyridine (DHP) and succinic semialdehyde. The chain is 6-hydroxy-3-succinoylpyridine 3-monooxygenase HspA from Pseudomonas putida (strain DSM 28022 / S16).